Reading from the N-terminus, the 878-residue chain is Alanine--tRNA ligase (878 aa).

The Zn(2+) site is built by histidine 567, histidine 571, cysteine 669, and histidine 673.

It belongs to the class-II aminoacyl-tRNA synthetase family. Requires Zn(2+) as cofactor.

It is found in the cytoplasm. It carries out the reaction tRNA(Ala) + L-alanine + ATP = L-alanyl-tRNA(Ala) + AMP + diphosphate. Its function is as follows. Catalyzes the attachment of alanine to tRNA(Ala) in a two-step reaction: alanine is first activated by ATP to form Ala-AMP and then transferred to the acceptor end of tRNA(Ala). Also edits incorrectly charged Ser-tRNA(Ala) and Gly-tRNA(Ala) via its editing domain. The polypeptide is Alanine--tRNA ligase (Rickettsia felis (strain ATCC VR-1525 / URRWXCal2) (Rickettsia azadi)).